The primary structure comprises 188 residues: Apolipoprotein M (188 aa).

A signal peptide (not cleaved) is located at residues 1 to 22; sequence MFHQIWAALLYLYGILLNSIYQ. 3 disulfides stabilise this stretch: cysteine 23/cysteine 167, cysteine 95/cysteine 183, and cysteine 128/cysteine 157. 2 residues coordinate tetradecanoate: glutamate 136 and arginine 143.

This sequence belongs to the calycin superfamily. Lipocalin family. Highly divergent. As to quaternary structure, interacts with LRP2; LRP2 mediates APOM renal uptake and subsequent lysosomal degradation.

It localises to the secreted. Probably involved in lipid transport. Can bind sphingosine-1-phosphate, myristic acid, palmitic acid and stearic acid, retinol, all-trans-retinoic acid and 9-cis-retinoic acid. This chain is Apolipoprotein M (APOM), found in Sus scrofa (Pig).